A 309-amino-acid chain; its full sequence is Homoserine O-acetyltransferase (309 aa).

Residue Cys142 is the Acyl-thioester intermediate of the active site. Substrate contacts are provided by Lys163 and Ser192. The active-site Proton acceptor is His235. Glu237 is an active-site residue. Arg249 is a substrate binding site.

It belongs to the MetA family.

It localises to the cytoplasm. It catalyses the reaction L-homoserine + acetyl-CoA = O-acetyl-L-homoserine + CoA. The protein operates within amino-acid biosynthesis; L-methionine biosynthesis via de novo pathway; O-acetyl-L-homoserine from L-homoserine: step 1/1. Transfers an acetyl group from acetyl-CoA to L-homoserine, forming acetyl-L-homoserine. This is Homoserine O-acetyltransferase from Allorhizobium ampelinum (strain ATCC BAA-846 / DSM 112012 / S4) (Agrobacterium vitis (strain S4)).